The following is a 351-amino-acid chain: MEFAPVSPPDGHAAAAARARQDTLTKPRGALGRLEDLSIWVASCQGQCPPRQFQRARIVVFAGDHGVARSGVSAYPPQLTAQMVANIDRGGAAINALASIADATIRIADLAVDADPLSQQIGIHKVRRGSGDIAIQDALTEDETARAIIAGQRIADEEVDRGADLLIAGDIGIGNTTAAAVLVAALTNAEPVAVVGFGTGIDDASWARKTAAVRDALCRIRLVLPDPVGLLRCCGGADLAAMAGFCAQAAVRRTPLLLDGMVVTAAALVAERLAPGSWQWWQAGHQSTEPGHALALAALDLDPILDLRMRLGEGTGATAALLVLRAAVAALTSMTTFAEAGVAGTSTSPPS.

Glu313 acts as the Proton acceptor in catalysis.

It belongs to the CobT family.

The enzyme catalyses 5,6-dimethylbenzimidazole + nicotinate beta-D-ribonucleotide = alpha-ribazole 5'-phosphate + nicotinate + H(+). The protein operates within nucleoside biosynthesis; alpha-ribazole biosynthesis; alpha-ribazole from 5,6-dimethylbenzimidazole: step 1/2. In terms of biological role, catalyzes the synthesis of alpha-ribazole-5'-phosphate from nicotinate mononucleotide (NAMN) and 5,6-dimethylbenzimidazole (DMB). This is Nicotinate-nucleotide--dimethylbenzimidazole phosphoribosyltransferase from Mycobacterium leprae (strain Br4923).